We begin with the raw amino-acid sequence, 267 residues long: Undecaprenyl-diphosphatase (267 aa).

Transmembrane regions (helical) follow at residues 1-21 (MSEL…FLPI), 39-59 (QGLA…LIYF), 87-107 (WWIL…KSLV), 113-133 (SGYV…WADA), 144-164 (TGLK…IPGT), 189-209 (FLMS…KFIL), 219-239 (LFLG…VFLI), and 244-264 (VGMM…FYIL).

It belongs to the UppP family.

It is found in the cell inner membrane. The enzyme catalyses di-trans,octa-cis-undecaprenyl diphosphate + H2O = di-trans,octa-cis-undecaprenyl phosphate + phosphate + H(+). Functionally, catalyzes the dephosphorylation of undecaprenyl diphosphate (UPP). Confers resistance to bacitracin. The sequence is that of Undecaprenyl-diphosphatase from Psychromonas ingrahamii (strain DSM 17664 / CCUG 51855 / 37).